A 284-amino-acid chain; its full sequence is NADH-cytochrome b5 reductase 1 (284 aa).

A helical transmembrane segment spans residues 8 to 28 (PFIIFATVAAIISSAVAYYFF). The FAD-binding FR-type domain maps to 41–144 (NDFQKFPLIE…RGPKGFFTYT (104 aa)). FAD is bound by residues 124–139 (ESKK…GPKG) and 150–182 (SFGM…KVSL).

This sequence belongs to the flavoprotein pyridine nucleotide cytochrome reductase family. As to quaternary structure, monomer. Component of the 2-(3-amino-3-carboxypropyl)histidine synthase complex composed of DPH1, DPH2, DPH3 and a NADH-dependent reductase, predominantly CBR1. FAD is required as a cofactor.

The protein resides in the mitochondrion outer membrane. It catalyses the reaction 2 Fe(III)-[cytochrome b5] + NADH = 2 Fe(II)-[cytochrome b5] + NAD(+) + H(+). It carries out the reaction 2 Fe(3+)-[Dph3] + NADH = 2 Fe(2+)-[Dph3] + NAD(+) + H(+). Its pathway is protein modification; peptidyl-diphthamide biosynthesis. Functionally, NADH-dependent reductase for DPH3 and cytochrome b5. Required for the first step of diphthamide biosynthesis, a post-translational modification of histidine which occurs in elongation factor 2. DPH1 and DPH2 transfer a 3-amino-3-carboxypropyl (ACP) group from S-adenosyl-L-methionine (SAM) to a histidine residue, the reaction is assisted by a reduction system comprising DPH3 and a NADH-dependent reductase, predominantly CBR1. By reducing DPH3, also involved in the formation of the tRNA wobble base modification mcm5s 2U (5-methoxycarbonylmethyl-2-thiouridine), mediated by the elongator complex. The cytochrome b5/NADH cytochrome b5 reductase electron transfer system supports the catalytic activity of several sterol biosynthetic enzymes. This chain is NADH-cytochrome b5 reductase 1 (CBR1), found in Debaryomyces hansenii (strain ATCC 36239 / CBS 767 / BCRC 21394 / JCM 1990 / NBRC 0083 / IGC 2968) (Yeast).